Here is a 266-residue protein sequence, read N- to C-terminus: Putative carbamate hydrolase RutD (266 aa).

Residues 14 to 238 enclose the AB hydrolase-1 domain; sequence PVVVLSAGLG…RVEMPWGGHA (225 aa).

It belongs to the AB hydrolase superfamily. Hydrolase RutD family.

The enzyme catalyses carbamate + 2 H(+) = NH4(+) + CO2. In terms of biological role, involved in pyrimidine catabolism. May facilitate the hydrolysis of carbamate, a reaction that can also occur spontaneously. The chain is Putative carbamate hydrolase RutD from Klebsiella pneumoniae (strain 342).